Reading from the N-terminus, the 407-residue chain is Indoleamine 2,3-dioxygenase 2 (407 aa).

A heme-binding site is contributed by histidine 347.

Belongs to the indoleamine 2,3-dioxygenase family. Heme is required as a cofactor. As to expression, detected in liver, small intestine, spleen, placenta, thymus, lung, brain, kidney, and colon. Also expressed at low level in testis and thyroid. Not expressed in the majority of human tumor samples (&gt;99%).

It catalyses the reaction L-tryptophan + O2 = N-formyl-L-kynurenine. It participates in amino-acid degradation; L-tryptophan degradation via kynurenine pathway; L-kynurenine from L-tryptophan: step 1/2. With respect to regulation, activity is inhibited by D-1MT (1-methyl-D-tryptophan) and MTH-trp (methylthiohydantoin-DL-tryptophan) but not L-1MT (1-methyl-L-tryptophan). Functionally, catalyzes the first and rate limiting step of the catabolism of the essential amino acid tryptophan along the kynurenine pathway. Involved in immune regulation. May not play a significant role in tryptophan-related tumoral resistance. This chain is Indoleamine 2,3-dioxygenase 2, found in Homo sapiens (Human).